Consider the following 671-residue polypeptide: DNA ligase (671 aa).

NAD(+) contacts are provided by residues Asp-37–Asp-41, Ser-86–Leu-87, and Glu-117. The N6-AMP-lysine intermediate role is filled by Lys-119. Arg-140, Glu-177, Lys-295, and Lys-319 together coordinate NAD(+). Residues Cys-413, Cys-416, Cys-431, and Cys-437 each contribute to the Zn(2+) site. In terms of domain architecture, BRCT spans Ile-594–Lys-671.

The protein belongs to the NAD-dependent DNA ligase family. LigA subfamily. Mg(2+) serves as cofactor. Requires Mn(2+) as cofactor.

The catalysed reaction is NAD(+) + (deoxyribonucleotide)n-3'-hydroxyl + 5'-phospho-(deoxyribonucleotide)m = (deoxyribonucleotide)n+m + AMP + beta-nicotinamide D-nucleotide.. In terms of biological role, DNA ligase that catalyzes the formation of phosphodiester linkages between 5'-phosphoryl and 3'-hydroxyl groups in double-stranded DNA using NAD as a coenzyme and as the energy source for the reaction. It is essential for DNA replication and repair of damaged DNA. This chain is DNA ligase, found in Polynucleobacter asymbioticus (strain DSM 18221 / CIP 109841 / QLW-P1DMWA-1) (Polynucleobacter necessarius subsp. asymbioticus).